A 689-amino-acid chain; its full sequence is Glycine--tRNA ligase beta subunit (689 aa).

It belongs to the class-II aminoacyl-tRNA synthetase family. In terms of assembly, tetramer of two alpha and two beta subunits.

Its subcellular location is the cytoplasm. It carries out the reaction tRNA(Gly) + glycine + ATP = glycyl-tRNA(Gly) + AMP + diphosphate. This Cronobacter sakazakii (strain ATCC BAA-894) (Enterobacter sakazakii) protein is Glycine--tRNA ligase beta subunit.